A 367-amino-acid chain; its full sequence is Serine O-succinyltransferase (367 aa).

In terms of domain architecture, AB hydrolase-1 spans 41 to 351; that stretch reads NAVLILTGLS…SPQGHDAFLV (311 aa). An important for substrate specificity region spans residues 48 to 51; the sequence is GLSP. Catalysis depends on serine 146, which acts as the Nucleophile. Residue arginine 215 coordinates substrate. Active-site residues include aspartate 313 and histidine 346. Aspartate 347 is a binding site for substrate.

This sequence belongs to the AB hydrolase superfamily. MetX family. In terms of assembly, homodimer.

It is found in the cytoplasm. It carries out the reaction succinyl-CoA + L-serine = O-succinyl-L-serine + CoA. The catalysed reaction is L-homoserine + succinyl-CoA = O-succinyl-L-homoserine + CoA. The protein operates within amino-acid biosynthesis; L-cysteine biosynthesis; L-cysteine from L-serine: step 1/2. Functionally, transfers a succinyl group from succinyl-CoA to L-serine, forming succinyl-L-serine. In vitro, also has homoserine succinyl transferase activity. In Frateuria aurantia (strain ATCC 33424 / DSM 6220 / KCTC 2777 / LMG 1558 / NBRC 3245 / NCIMB 13370) (Acetobacter aurantius), this protein is Serine O-succinyltransferase.